We begin with the raw amino-acid sequence, 152 residues long: MSLVIPEKFQHILRVMNTNIDGRRKIMFALTSIKGVGRRYSNIVCKKADIDLSKRAGELSDEEVERLITIMQNPRQYKIPDWFLNRQKDVKDGKYSQVMANSLDNKLREDLERLKKIRAHRGLRHYWGLRVRGQHTKTTGRRGRTVGVSKKK.

The protein belongs to the universal ribosomal protein uS13 family.

The protein localises to the cytoplasm. Functionally, located at the top of the head of the 40S subunit, it contacts several helices of the 18S rRNA. This is Small ribosomal subunit protein uS13 (RPS18) from Branchiostoma belcheri (Amphioxus).